We begin with the raw amino-acid sequence, 622 residues long: ABC transporter permease protein YxdM (622 aa).

A run of 10 helical transmembrane segments spans residues 20–40, 56–76, 118–138, 154–174, 195–215, 219–239, 279–299, 498–518, 558–578, and 590–610; these read AFFLSSAFSVLIFFTFAMFLF, GLTAAEWMIFVFSFLFVLYSV, AGIIGGFIFSKTFFTVGAYIL, ITACGFLLLFFFLSQFTILFV, PSVLLSLFGIACLCGGYGMVL, VHGAEPFIILLLTVIGTYFFF, LFFIVSIISAVAFTATGVLAM, TVQLPSLSLFIGLFIAIVFFV, IQLAILFFFPFVIAVMHTLFA, and VAGPLSLTIGGFFIFQLLFFL.

Belongs to the ABC-4 integral membrane protein family. The complex is composed of two ATP-binding proteins (YxdL) and two transmembrane proteins (YxdM).

The protein resides in the cell membrane. Functionally, part of the ABC transporter complex YxdLM which could be involved in peptide resistance. The polypeptide is ABC transporter permease protein YxdM (yxdM) (Bacillus subtilis (strain 168)).